The sequence spans 336 residues: Isopentenyl-diphosphate delta-isomerase (336 aa).

5–6 (RK) serves as a coordination point for substrate. FMN is bound by residues 60–62 (AMT), serine 90, and asparagine 117. Residue glutamine 147 coordinates substrate. A Mg(2+)-binding site is contributed by glutamate 148. Residues lysine 179, serine 204, threonine 209, 253-255 (GVR), and 274-275 (SR) contribute to the FMN site.

This sequence belongs to the IPP isomerase type 2 family. In terms of assembly, homooctamer. Dimer of tetramers. Requires FMN as cofactor. It depends on NADPH as a cofactor. Mg(2+) serves as cofactor.

The protein resides in the cytoplasm. The catalysed reaction is isopentenyl diphosphate = dimethylallyl diphosphate. In terms of biological role, involved in the biosynthesis of isoprenoids. Catalyzes the 1,3-allylic rearrangement of the homoallylic substrate isopentenyl (IPP) to its allylic isomer, dimethylallyl diphosphate (DMAPP). The sequence is that of Isopentenyl-diphosphate delta-isomerase from Streptococcus pneumoniae serotype 4 (strain ATCC BAA-334 / TIGR4).